The following is a 212-amino-acid chain: ATP-dependent dethiobiotin synthetase BioD (212 aa).

10–15 (GVGKTF) contacts ATP. Thr-14 lines the Mg(2+) pocket. Residue Lys-36 is part of the active site. Ser-40 is a binding site for substrate. ATP contacts are provided by residues Asp-45, 106–109 (EGAG), and 167–168 (NC). Mg(2+) contacts are provided by Asp-45 and Glu-106.

Belongs to the dethiobiotin synthetase family. In terms of assembly, homodimer. Requires Mg(2+) as cofactor.

Its subcellular location is the cytoplasm. The enzyme catalyses (7R,8S)-7,8-diammoniononanoate + CO2 + ATP = (4R,5S)-dethiobiotin + ADP + phosphate + 3 H(+). It functions in the pathway cofactor biosynthesis; biotin biosynthesis; biotin from 7,8-diaminononanoate: step 1/2. Its function is as follows. Catalyzes a mechanistically unusual reaction, the ATP-dependent insertion of CO2 between the N7 and N8 nitrogen atoms of 7,8-diaminopelargonic acid (DAPA, also called 7,8-diammoniononanoate) to form a ureido ring. The protein is ATP-dependent dethiobiotin synthetase BioD of Methanococcus aeolicus (strain ATCC BAA-1280 / DSM 17508 / OCM 812 / Nankai-3).